Here is a 222-residue protein sequence, read N- to C-terminus: Phosphoribosylformylglycinamidine synthase subunit PurQ (222 aa).

A Glutamine amidotransferase type-1 domain is found at 3–222; the sequence is SAVIQLPGLN…LFESVLGRAA (220 aa). C86 serves as the catalytic Nucleophile. Residues H196 and E198 contribute to the active site.

As to quaternary structure, part of the FGAM synthase complex composed of 1 PurL, 1 PurQ and 2 PurS subunits.

Its subcellular location is the cytoplasm. The catalysed reaction is N(2)-formyl-N(1)-(5-phospho-beta-D-ribosyl)glycinamide + L-glutamine + ATP + H2O = 2-formamido-N(1)-(5-O-phospho-beta-D-ribosyl)acetamidine + L-glutamate + ADP + phosphate + H(+). It carries out the reaction L-glutamine + H2O = L-glutamate + NH4(+). It functions in the pathway purine metabolism; IMP biosynthesis via de novo pathway; 5-amino-1-(5-phospho-D-ribosyl)imidazole from N(2)-formyl-N(1)-(5-phospho-D-ribosyl)glycinamide: step 1/2. Part of the phosphoribosylformylglycinamidine synthase complex involved in the purines biosynthetic pathway. Catalyzes the ATP-dependent conversion of formylglycinamide ribonucleotide (FGAR) and glutamine to yield formylglycinamidine ribonucleotide (FGAM) and glutamate. The FGAM synthase complex is composed of three subunits. PurQ produces an ammonia molecule by converting glutamine to glutamate. PurL transfers the ammonia molecule to FGAR to form FGAM in an ATP-dependent manner. PurS interacts with PurQ and PurL and is thought to assist in the transfer of the ammonia molecule from PurQ to PurL. The chain is Phosphoribosylformylglycinamidine synthase subunit PurQ from Chelativorans sp. (strain BNC1).